The sequence spans 283 residues: Putative F-box protein At1g60370 (283 aa).

Residues 4–53 (GEKLESIPIDLIIEIHSRLPAESVARFRCVSKLWGSMFRRPYFTELFLTR) enclose the F-box domain.

The polypeptide is Putative F-box protein At1g60370 (Arabidopsis thaliana (Mouse-ear cress)).